The following is a 261-amino-acid chain: 8-demethyl-8-(2,3-dimethoxy-alpha-L-rhamnosyl)-tetracenomycin-C 4'-O-methyltransferase (261 aa).

Residues 53–54 (TM), 81–85 (ETGVW), 111–115 (DSFEG), Phe-167, 185–186 (DG), and Ser-191 each bind S-adenosyl-L-methionine. Position 185 (Asp-185) interacts with Mg(2+). Positions 212 and 213 each coordinate Mg(2+).

Belongs to the methyltransferase TylF/MycF family. Mg(2+) is required as a cofactor.

The catalysed reaction is 8-demethyl-8-(2,3-di-O-methyl-alpha-L-rhamnosyl)-tetracenomycin C + S-adenosyl-L-methionine = 8-demethyl-8-(2,3,4-tri-O-methyl-alpha-L-rhamnosyl)-tetracenomycin C + S-adenosyl-L-homocysteine + H(+). The protein operates within antibiotic biosynthesis. In terms of biological role, O-methyltransferase involved in the biosynthesis of the permethylated L-rhamnose moiety of elloramycin, an antitumor polyketide. Mediates the methylation of the hydroxy groups at the 4'-position after the sugar moiety has been attached to the aglycon. The protein is 8-demethyl-8-(2,3-dimethoxy-alpha-L-rhamnosyl)-tetracenomycin-C 4'-O-methyltransferase of Streptomyces olivaceus.